The following is a 332-amino-acid chain: MIGVIFGVIVPYIAVAIFVIGVIYRIVNWANSAVPLKIPTTGGQQKSFPFIKRTIYDRFDSPYTWWETAGRMLLEIFFFRSLLKNTRYYLDRVSQKDARWLWLFGILFHYSLLLVLIRHSRFFLDPVPSFVETLSEIEAFKGVFIPSVYMSGLAIVAALFLLWLRRIFLSRERTLSLPSDHFALILLLAITISGNVMRYFVKADLFAVKELLMSLMTFNIGHAVEVANTIEPIFYVHFALASFLLAYFPFSKLMHAGGVFFSPTRNMPNDNRARRHVNPWDPADVPLLAKGITVAGRVYKSKKLDWDTYYSMYTDQLQEIEEADYKIVPEEL.

A run of 5 helical transmembrane segments spans residues 3-23 (GVIFGVIVPYIAVAIFVIGVI), 97-117 (DARWLWLFGILFHYSLLLVLI), 143-163 (VFIPSVYMSGLAIVAALFLLW), 177-197 (LPSDHFALILLLAITISGNVM), and 230-250 (IEPIFYVHFALASFLLAYFPF).

As to quaternary structure, consists of five subunits: an integral membrane subunit, a cytochrome b-like subunit, a cytochrome c subunit and two iron-sulfur subunits.

It localises to the cell membrane. In terms of biological role, has menaquinol-oxidizing activity. HmeC and HmeD subunits may together mediate electron transfer from menaquinol to an unidentified electron acceptor on the cytoplasmic side of the membrane. This is Hdr-like menaquinol oxidoreductase cytochrome b-like subunit (hmeC) from Archaeoglobus fulgidus (strain ATCC 49558 / DSM 4304 / JCM 9628 / NBRC 100126 / VC-16).